Here is a 356-residue protein sequence, read N- to C-terminus: Isopentenyl-diphosphate delta-isomerase (356 aa).

8 to 9 (RK) provides a ligand contact to substrate. Residues 66–68 (AIT), serine 96, and asparagine 124 contribute to the FMN site. 96–98 (SQR) contributes to the substrate binding site. Glutamine 160 contacts substrate. Position 161 (glutamate 161) interacts with Mg(2+). FMN-binding positions include lysine 201, threonine 231, 280-282 (GIR), and 301-302 (AL).

It belongs to the IPP isomerase type 2 family. As to quaternary structure, homooctamer. Dimer of tetramers. FMN is required as a cofactor. It depends on NADPH as a cofactor. Mg(2+) serves as cofactor.

It localises to the cytoplasm. The catalysed reaction is isopentenyl diphosphate = dimethylallyl diphosphate. Involved in the biosynthesis of isoprenoids. Catalyzes the 1,3-allylic rearrangement of the homoallylic substrate isopentenyl (IPP) to its allylic isomer, dimethylallyl diphosphate (DMAPP). The polypeptide is Isopentenyl-diphosphate delta-isomerase (Methanococcus aeolicus (strain ATCC BAA-1280 / DSM 17508 / OCM 812 / Nankai-3)).